We begin with the raw amino-acid sequence, 460 residues long: Nuclear distribution protein PAC1 (460 aa).

Positions 9 to 41 (QAEELHKSIIAYLAANNLQDSANAMRTELGLGE) constitute a LisH domain. Residues 61 to 88 (TSVVRLQKKIMDLEAQTQTLQTELNSAT) are a coiled coil. The span at 82–92 (TELNSATPTSN) shows a compositional bias: polar residues. A disordered region spans residues 82–105 (TELNSATPTSNRRGDPSSWLPAGP). WD repeat units follow at residues 112 to 153 (SHRT…RTVK), 155 to 195 (HTKA…QNIR), 199 to 246 (GHDH…CVKT), 249 to 288 (GHADWIRDVSPSLDGKYLLSTGNDRTVRLWDISVPNPEAK), 293 to 354 (GHEH…KTLI), 355 to 394 (GHDNWVRGLVFHPSGKFLLSVSDDKTIRCWDLSQEGKCVK), and 399 to 456 (SHEH…MSLR). The interval 414–433 (IKDKGPGEETNGDVGTPKKA) is disordered.

Belongs to the WD repeat LIS1/nudF family. In terms of assembly, self-associates. Interacts with NDL1 and dynein.

The protein localises to the cytoplasm. The protein resides in the cytoskeleton. It is found in the spindle pole. Positively regulates the activity of the minus-end directed microtubule motor protein dynein. May enhance dynein-mediated microtubule sliding by targeting dynein to the microtubule plus end. Required for nuclear migration during vegetative growth as well as development. Required for retrograde early endosome (EE) transport from the hyphal tip. Required for localization of dynein to the mitotic spindle poles. Recruits additional proteins to the dynein complex at SPBs. In Gibberella zeae (strain ATCC MYA-4620 / CBS 123657 / FGSC 9075 / NRRL 31084 / PH-1) (Wheat head blight fungus), this protein is Nuclear distribution protein PAC1.